Consider the following 560-residue polypeptide: Oxygen-dependent choline dehydrogenase (560 aa).

6 to 35 (DYIIVGAGSAGCVLADRLSESGDHSVLLLE) is an FAD binding site. Catalysis depends on H470, which acts as the Proton acceptor.

It belongs to the GMC oxidoreductase family. FAD is required as a cofactor.

The catalysed reaction is choline + A = betaine aldehyde + AH2. It carries out the reaction betaine aldehyde + NAD(+) + H2O = glycine betaine + NADH + 2 H(+). It participates in amine and polyamine biosynthesis; betaine biosynthesis via choline pathway; betaine aldehyde from choline (cytochrome c reductase route): step 1/1. In terms of biological role, involved in the biosynthesis of the osmoprotectant glycine betaine. Catalyzes the oxidation of choline to betaine aldehyde and betaine aldehyde to glycine betaine at the same rate. The sequence is that of Oxygen-dependent choline dehydrogenase from Vibrio vulnificus (strain YJ016).